Consider the following 436-residue polypeptide: Protein MSS51, mitochondrial (436 aa).

Residues Met1 to Leu26 constitute a mitochondrion transit peptide. The segment at Ala43–Gln66 is disordered.

This sequence belongs to the MSS51 family. As to quaternary structure, interacts with COX1 and COX14.

Its subcellular location is the mitochondrion inner membrane. Its function is as follows. Has a dual role in the assembly of cytochrome oxidase subunit 1 (COX1). It has a regulative function on COX1 synthesis, acting as a translational activator specific for the COX1 mRNA, and it also binds to newly synthesized COX1 protein. Together with COX14, may act as a chaperone that binds efficiently unassembled COX1 and prevents it from unproductive aggregation. When bound to COX1, MSS51 is unable to interact with the COX1 mRNA and translation is halted. This may be a feedback control that ensures that COX1 is only produced as long as potentially harmful assembly intermediates are not accumulating. The protein is Protein MSS51, mitochondrial (MSS51) of Saccharomyces cerevisiae (strain ATCC 204508 / S288c) (Baker's yeast).